The chain runs to 370 residues: uncharacterized protein (370 aa).

One can recognise an OBG-type G domain in the interval 62–293; that stretch reads ATVALVGFPS…LKERMWRALG (232 aa). GTP-binding positions include 68 to 75, 114 to 118, and 243 to 246; these read GFPSVGKS, DVPGL, and NKVD. A TGS domain is found at 293-368; it reads GLIRIYMDKP…EDEDVLRVVA (76 aa).

It belongs to the TRAFAC class OBG-HflX-like GTPase superfamily. OBG GTPase family.

This is an uncharacterized protein from Halobacterium salinarum (strain ATCC 700922 / JCM 11081 / NRC-1) (Halobacterium halobium).